Consider the following 372-residue polypeptide: Alginate lyase (372 aa).

Residues M1–A22 form the signal peptide. Substrate-binding positions include S61 to K62, H134 to T135, and Y252.

Belongs to the polysaccharide lyase 5 family.

The protein localises to the periplasm. The enzyme catalyses Eliminative cleavage of alginate to give oligosaccharides with 4-deoxy-alpha-L-erythro-hex-4-enuronosyl groups at their non-reducing ends and beta-D-mannuronate at their reducing end.. Its activity is regulated as follows. Monovalent cations such as potassium and sodium enhance activity, as well as a combined action of these cations with magnesium. However, other cations like calcium, cobalt, manganese and zinc, or the presence of EDTA, do not affect the enzymatic activity. Its function is as follows. Catalyzes the depolymerization of alginate by cleaving the beta-1,4 glycosidic bond between two adjacent sugar residues via a beta-elimination mechanism. Degrades deacetylated polymannuronate alginate more efficiently than non-deacetylated polyM. Is able to degrade its own alginate, but at a lower efficiency than that produced from M.pyriferia and P.aeruginosa. May serve to degrade mislocalized alginate that is trapped in the periplasmic space. In Azotobacter chroococcum mcd 1, this protein is Alginate lyase.